The sequence spans 1978 residues: Centrosomal protein Cep290 (1978 aa).

The interval 1–650 (MSMDIPETVS…SLCEVPEIAE (650 aa)) is necessary and sufficient for function in ciliogenesis, transition zone (TZ) assembly, and recruitment of DZP1 and Mks1 to the TZ. Also required for subcellular localization to the cilium basal body. 2 coiled-coil regions span residues 76-384 (DRRL…KSQQ) and 471-505 (IERLTLKLRTSEELRLQLKLEKSELRRKLLELQQD). The tract at residues 271–296 (QLEGKSISSGQTNSSNSQSQQEEEHA) is disordered. The segment covering 276-290 (SISSGQTNSSNSQSQ) has biased composition (low complexity). The segment at 663-688 (ATRPSSPTEATMGLRRPTVPDPEEKP) is disordered. 3 coiled-coil regions span residues 853 to 887 (FEEQQQELLTWRSKQAELQRETKQLEGLLHVANEQ), 922 to 970 (LAKV…TQQD), and 1192 to 1233 (ADAV…SRSE). Residues 1313–1324 (KEKLRQKPEVPV) show a composition bias toward basic and acidic residues. The disordered stretch occupies residues 1313-1397 (KEKLRQKPEV…EKQDTEELKE (85 aa)). Positions 1329-1341 (STDSRSSSSSDSS) are enriched in low complexity. The span at 1379 to 1391 (VTEEPEGEEEKQD) shows a compositional bias: acidic residues. Coiled-coil stretches lie at residues 1405–1439 (IKDLKDKLEYSERSLKTREEEVDILKEKLKLCQER) and 1501–1654 (LNRT…LESK). Disordered regions lie at residues 1684-1714 (VGVSKFAPSPSESPETYTGPSSECSSPAHHH) and 1859-1884 (LKDGRRSTESRSSMDSTPAEAARLQQ). Positions 1693 to 1708 (PSESPETYTGPSSECS) are enriched in polar residues. A coiled-coil region spans residues 1726 to 1935 (IEALKSRIEL…KEQLVKKTQL (210 aa)).

As to quaternary structure, interacts (via N-terminus) with DZIP1. In terms of tissue distribution, expressed in sensory neurons type I and in germ cells (at protein level).

The protein resides in the cytoplasm. Its subcellular location is the cytoskeleton. It localises to the cilium basal body. It is found in the microtubule organizing center. The protein localises to the centrosome. The protein resides in the centriole. In terms of biological role, essential for ciliogenesis in sensory neurons and spermatocytes. During neuron and spermatocyte ciliogenesis, essential for initiating transition zone (TZ) assembly and is required for the formation of diverse connections between microtubules and between microtubules and the membrane. Regulates TZ assembly by recruiting DZIP1 to the plasma membrane where it promotes early ciliary membrane formation resulting in the initiation of TZ assembly. The polypeptide is Centrosomal protein Cep290 (Drosophila melanogaster (Fruit fly)).